Consider the following 1037-residue polypeptide: Ephrin type-A receptor 5 (1037 aa).

A signal peptide spans 1 to 24 (MRGSGPRGAGRRRPPSGGGDTPIT). The disordered stretch occupies residues 1-24 (MRGSGPRGAGRRRPPSGGGDTPIT). The Extracellular portion of the chain corresponds to 25–573 (PASLAGCYSA…AASSDQSQIP (549 aa)). In terms of domain architecture, Eph LBD spans 60 to 238 (EVNLLDSRTV…YYKKCPSVVR (179 aa)). Asparagine 264, asparagine 299, asparagine 369, asparagine 423, asparagine 436, and asparagine 461 each carry an N-linked (GlcNAc...) asparagine glycan. 2 consecutive Fibronectin type-III domains span residues 357 to 467 (PPSA…TNQA) and 468 to 562 (APSP…TTPV). A helical membrane pass occupies residues 574–594 (VIAVSVTVGVILLAVVIGVLL). Over 595–1037 (SGSCCECGCG…VQLVNGMVPL (443 aa)) the chain is Cytoplasmic. 2 positions are modified to phosphotyrosine; by autocatalysis: tyrosine 650 and tyrosine 656. Positions 675 to 936 (ITIERVIGAG…EIVNMLDKLI (262 aa)) constitute a Protein kinase domain. ATP-binding positions include 681 to 689 (IGAGEFGEV) and lysine 707. Residue aspartate 800 is the Proton acceptor of the active site. Phosphotyrosine; by autocatalysis is present on residues tyrosine 833 and tyrosine 982. The region spanning 965–1029 (GAYRSVGEWL…MNSLQEMKVQ (65 aa)) is the SAM domain. A PDZ-binding motif is present at residues 1035–1037 (VPL).

The protein belongs to the protein kinase superfamily. Tyr protein kinase family. Ephrin receptor subfamily. Heterotetramer upon binding of the ligand. The heterotetramer is composed of an ephrin dimer and a receptor dimer. Oligomerization is probably required to induce biological responses. Interacts (via SAM domain) with SAMD5 (via SAM domain). Phosphorylated. Phosphorylation is stimulated by the ligand EFNA5. Dephosphorylation upon stimulation by glucose, inhibits EPHA5 forward signaling and results in insulin secretion. In terms of tissue distribution, almost exclusively expressed in the nervous system in cortical neurons, cerebellar Purkinje cells and pyramidal neurons within the cortex and hippocampus. Display an increasing gradient of expression from the forebrain to hindbrain and spinal cord.

The protein localises to the cell membrane. It localises to the cell projection. The protein resides in the axon. It is found in the dendrite. It catalyses the reaction L-tyrosyl-[protein] + ATP = O-phospho-L-tyrosyl-[protein] + ADP + H(+). Receptor tyrosine kinase which binds promiscuously GPI-anchored ephrin-A family ligands residing on adjacent cells, leading to contact-dependent bidirectional signaling into neighboring cells. The signaling pathway downstream of the receptor is referred to as forward signaling while the signaling pathway downstream of the ephrin ligand is referred to as reverse signaling. Among GPI-anchored ephrin-A ligands, EFNA5 most probably constitutes the cognate/functional ligand for EPHA5. Functions as an axon guidance molecule during development and may be involved in the development of the retinotectal, entorhino-hippocampal and hippocamposeptal pathways. Together with EFNA5 plays also a role in synaptic plasticity in adult brain through regulation of synaptogenesis. In addition to its function in the nervous system, the interaction of EPHA5 with EFNA5 mediates communication between pancreatic islet cells to regulate glucose-stimulated insulin secretion. The sequence is that of Ephrin type-A receptor 5 (EPHA5) from Homo sapiens (Human).